We begin with the raw amino-acid sequence, 263 residues long: Palmitoyltransferase ZDHHC21 (263 aa).

Residues 1–4 (MKMR) are Cytoplasmic-facing. A helical transmembrane segment spans residues 5-25 (LHFVVDPMGWFCMSMVFFVWI). Residues 26-44 (YNSFLIPKLVLLPHYAEGH) are Extracellular-facing. The helical transmembrane segment at 45–65 (ITAEPVICYYLASLLCFSALF) threads the bilayer. Over 66–131 (RASTTDPGKL…WINNCVGEDN (66 aa)) the chain is Cytoplasmic. Positions 90–140 (ELCNKCNMMRPKRSHHCSRCGHCVRRMDHHCPWINNCVGEDNHWLFLQLCF) constitute a DHHC domain. The active-site S-palmitoyl cysteine intermediate is C120. The helical transmembrane segment at 132-152 (HWLFLQLCFYTQVLSFYTLVL) threads the bilayer. The Extracellular segment spans residues 153–181 (DFCQYYYFLPLSSVDQADFAVHHELALLR). Residues 182–202 (VSCFMGLIMFGGISSLFYTQV) traverse the membrane as a helical segment. Over 203-263 (KGILTDTTTI…KLNLTIRSHV (61 aa)) the chain is Cytoplasmic.

It belongs to the DHHC palmitoyltransferase family.

It localises to the golgi apparatus membrane. The protein resides in the golgi apparatus. It is found in the cis-Golgi network membrane. Its subcellular location is the cell membrane. The catalysed reaction is L-cysteinyl-[protein] + hexadecanoyl-CoA = S-hexadecanoyl-L-cysteinyl-[protein] + CoA. Functionally, palmitoyltransferase that catalyzes the addition of palmitate onto various protein substrates. The chain is Palmitoyltransferase ZDHHC21 from Danio rerio (Zebrafish).